The following is a 360-amino-acid chain: Peptide chain release factor 1 (360 aa).

N5-methylglutamine is present on glutamine 235. The disordered stretch occupies residues 285-313 (KRQQAEASTRRNLLGSGDRSDRNRTYNFP).

It belongs to the prokaryotic/mitochondrial release factor family. Post-translationally, methylated by PrmC. Methylation increases the termination efficiency of RF1.

It is found in the cytoplasm. Peptide chain release factor 1 directs the termination of translation in response to the peptide chain termination codons UAG and UAA. This Shigella boydii serotype 18 (strain CDC 3083-94 / BS512) protein is Peptide chain release factor 1.